The sequence spans 53 residues: Light-harvesting protein B-800/820 alpha chain (53 aa).

The Cytoplasmic portion of the chain corresponds to 1-14 (MNQGKIWTVVNPAV). Residues 15-35 (GLPLLLGSVAITALLVHLAVL) traverse the membrane as a helical segment. An a bacteriochlorophyll-binding site is contributed by histidine 31. Over 36–53 (THTTWFPAFTQGGLKKAA) the chain is Periplasmic.

It belongs to the antenna complex alpha subunit family. In terms of assembly, the core complex is formed by different alpha and beta chains, binding bacteriochlorophyll molecules, and arranged most probably in tetrameric structures disposed around the reaction center. The non-pigmented gamma chains may constitute additional components.

It is found in the cell inner membrane. Its function is as follows. Antenna complexes are light-harvesting systems, which transfer the excitation energy to the reaction centers. The protein is Light-harvesting protein B-800/820 alpha chain of Rhodoblastus acidophilus (Rhodopseudomonas acidophila).